The chain runs to 122 residues: Head fiber dimeric protein (122 aa).

In terms of assembly, homodimer. Interacts with the major capsid protein.

Its subcellular location is the virion. Its function is as follows. Forms short fibers at the surface of the viral capsid. The sequence is that of Head fiber dimeric protein from Bacteroides intestinalis (Bacteroides phage PhiCrAss001).